A 570-amino-acid polypeptide reads, in one-letter code: Proline--tRNA ligase (570 aa).

This sequence belongs to the class-II aminoacyl-tRNA synthetase family. ProS type 1 subfamily. Homodimer.

It localises to the cytoplasm. The catalysed reaction is tRNA(Pro) + L-proline + ATP = L-prolyl-tRNA(Pro) + AMP + diphosphate. In terms of biological role, catalyzes the attachment of proline to tRNA(Pro) in a two-step reaction: proline is first activated by ATP to form Pro-AMP and then transferred to the acceptor end of tRNA(Pro). As ProRS can inadvertently accommodate and process non-cognate amino acids such as alanine and cysteine, to avoid such errors it has two additional distinct editing activities against alanine. One activity is designated as 'pretransfer' editing and involves the tRNA(Pro)-independent hydrolysis of activated Ala-AMP. The other activity is designated 'posttransfer' editing and involves deacylation of mischarged Ala-tRNA(Pro). The misacylated Cys-tRNA(Pro) is not edited by ProRS. The sequence is that of Proline--tRNA ligase from Clostridium botulinum (strain Eklund 17B / Type B).